The following is a 119-amino-acid chain: Insulin growth factor-like family member 2 (119 aa).

An N-terminal signal peptide occupies residues 1–25 (MVPRIFAPAYVSVCLLLLCPREVIA).

The protein belongs to the IGFL family. Detected in cerebellum, heart, placenta, spleen, stomach, testis and thymus.

Its subcellular location is the secreted. Functionally, potential ligand of the IGFLR1 cell membrane receptor. The chain is Insulin growth factor-like family member 2 (IGFL2) from Homo sapiens (Human).